A 247-amino-acid polypeptide reads, in one-letter code: Nodulation protein H (247 aa).

Residues M1 to P17 form a hydrophobic region.

Its function is as follows. Required for the formation of sulfated nod factor. Proposed to transfer activated sulfate (PAPS) to a N-acetylglucosamine of the nod factor. In Rhizobium meliloti (strain 1021) (Ensifer meliloti), this protein is Nodulation protein H (nodH).